We begin with the raw amino-acid sequence, 89 residues long: Barrier-to-autointegration factor (89 aa).

N-acetylmethionine is present on Met-1. An N-acetylthreonine; in Barrier-to-autointegration factor, N-terminally processed modification is found at Thr-2. 2 positions are modified to phosphothreonine; by VRK1 and VRK2: Thr-2 and Thr-3. The residue at position 4 (Ser-4) is a Phosphoserine; by VRK1 and VRK2. A HhH domain is found at 20 to 35 (VGSLAGIGEVLGKKLE).

This sequence belongs to the BAF family. As to quaternary structure, homodimer. Heterodimerizes with BANF2. Interacts with ANKLE2/LEM4, leading to decreased phosphorylation by VRK1 and promoting dephosphorylation by protein phosphatase 2A (PP2A). Binds non-specifically to double-stranded DNA, and is found as a hexamer or dodecamer upon DNA binding. Binds to LEM domain-containing nuclear proteins such as LEMD3/MAN1, TMPO/LAP2 and EMD (emerin). Interacts with ANKLE1 (via LEM domain); the interaction may favor BANF1 dimerization. Interacts with CRX and LMNA (lamin-A). Binds linker histone H1.1 and core histones H3. Interacts with LEMD2 (via LEM domain). Interacts with PARP1; interaction takes place in response to oxidative DNA damage. Post-translationally, ser-4 is the major site of phosphorylation as compared to Thr-2 and Thr-3. Phosphorylation on Thr-2; Thr-3 and Ser-4 disrupts its ability to bind DNA and reduces its ability to bind LEM domain-containing proteins. Non phosphorylated BAF seems to enhance binding between EMD and LMNA. Dephosphorylated by protein phosphatase 2A (PP2A) following interaction with ANKLE2/LEM4 during mitotic exit, leading to mitotic nuclear envelope reassembly.

It localises to the nucleus. The protein localises to the chromosome. Its subcellular location is the nucleus envelope. The protein resides in the cytoplasm. Non-specific DNA-binding protein that plays key roles in mitotic nuclear reassembly, chromatin organization, DNA damage response, gene expression and intrinsic immunity against foreign DNA. Contains two non-specific double-stranded DNA (dsDNA)-binding sites which promote DNA cross-bridging. Plays a key role in nuclear membrane reformation at the end of mitosis by driving formation of a single nucleus in a spindle-independent manner. Transiently cross-bridges anaphase chromosomes via its ability to bridge distant DNA sites, leading to the formation of a dense chromatin network at the chromosome ensemble surface that limits membranes to the surface. Also acts as a negative regulator of innate immune activation by restricting CGAS activity toward self-DNA upon acute loss of nuclear membrane integrity. Outcompetes CGAS for DNA-binding, thereby preventing CGAS activation and subsequent damaging autoinflammatory responses. Also involved in DNA damage response: interacts with PARP1 in response to oxidative stress, thereby inhibiting the ADP-ribosyltransferase activity of PARP1. Involved in the recognition of exogenous dsDNA in the cytosol: associates with exogenous dsDNA immediately after its appearance in the cytosol at endosome breakdown and is required to avoid autophagy. In case of poxvirus infection, has an antiviral activity by blocking viral DNA replication. The polypeptide is Barrier-to-autointegration factor (BANF1) (Bos taurus (Bovine)).